Here is a 751-residue protein sequence, read N- to C-terminus: Catalase-peroxidase 1 (751 aa).

Residues Met1–Ser11 are compositionally biased toward basic and acidic residues. The disordered stretch occupies residues Met1–Asn31. Positions Trp103–Tyr225 form a cross-link, tryptophyl-tyrosyl-methioninium (Trp-Tyr) (with M-251). His104 acts as the Proton acceptor in catalysis. The segment at residues Tyr225–Met251 is a cross-link (tryptophyl-tyrosyl-methioninium (Tyr-Met) (with W-103)). His266 is a binding site for heme b. Residues Ala345–Met375 form a disordered region.

The protein belongs to the peroxidase family. Peroxidase/catalase subfamily. Homodimer or homotetramer. It depends on heme b as a cofactor. In terms of processing, formation of the three residue Trp-Tyr-Met cross-link is important for the catalase, but not the peroxidase activity of the enzyme.

The enzyme catalyses H2O2 + AH2 = A + 2 H2O. It carries out the reaction 2 H2O2 = O2 + 2 H2O. Bifunctional enzyme with both catalase and broad-spectrum peroxidase activity. The sequence is that of Catalase-peroxidase 1 from Cupriavidus pinatubonensis (strain JMP 134 / LMG 1197) (Cupriavidus necator (strain JMP 134)).